The sequence spans 147 residues: Anti-sigma F factor (147 aa).

The protein belongs to the anti-sigma-factor family.

It carries out the reaction L-seryl-[protein] + ATP = O-phospho-L-seryl-[protein] + ADP + H(+). The catalysed reaction is L-threonyl-[protein] + ATP = O-phospho-L-threonyl-[protein] + ADP + H(+). Binds to sigma F and blocks its ability to form an RNA polymerase holoenzyme (E-sigma F). Phosphorylates SpoIIAA on a serine residue. This phosphorylation may enable SpoIIAA to act as an anti-anti-sigma factor that counteracts SpoIIAB and thus releases sigma F from inhibition. In Heyndrickxia coagulans (Weizmannia coagulans), this protein is Anti-sigma F factor.